A 501-amino-acid polypeptide reads, in one-letter code: Probable cytosol aminopeptidase (501 aa).

Residues lysine 257 and aspartate 262 each coordinate Mn(2+). Residue lysine 269 is part of the active site. Mn(2+)-binding residues include aspartate 281, aspartate 341, and glutamate 343. Arginine 345 is an active-site residue.

This sequence belongs to the peptidase M17 family. Requires Mn(2+) as cofactor.

The protein localises to the cytoplasm. It carries out the reaction Release of an N-terminal amino acid, Xaa-|-Yaa-, in which Xaa is preferably Leu, but may be other amino acids including Pro although not Arg or Lys, and Yaa may be Pro. Amino acid amides and methyl esters are also readily hydrolyzed, but rates on arylamides are exceedingly low.. It catalyses the reaction Release of an N-terminal amino acid, preferentially leucine, but not glutamic or aspartic acids.. Functionally, presumably involved in the processing and regular turnover of intracellular proteins. Catalyzes the removal of unsubstituted N-terminal amino acids from various peptides. In Synechococcus sp. (strain RCC307), this protein is Probable cytosol aminopeptidase.